The chain runs to 75 residues: Brevinin-2HS2A (75 aa).

The signal sequence occupies residues 1 to 22 (MFTLKKPLLLLFFLGTISLSLC). Residues 23–40 (QEERDADEEEGEMIEEEV) constitute a propeptide that is removed on maturation. C69 and C75 form a disulfide bridge.

The protein belongs to the frog skin active peptide (FSAP) family. Brevinin subfamily. In terms of tissue distribution, expressed by the skin glands.

It localises to the secreted. Functionally, has antimicrobial activity against some Gram-positive bacteria and fungi but has no activity against a range of Gram-negative bacteria except P.faecalis. Has antimicrobial activity against the Gram-positive bacteria S.aureus ATCC 25923 (MIC=19 uM), B.licheniformis X39 (MIC=37.5 uM) and R.rhodochrous X15 (MIC=9.5 uM), is virtually inactive against E.faecium 091299 (MIC=150 uM) and S.carnosus KHS (MIC=150 uM) and inactive against E.faecalis 981. Active against the Gram-negative bacterium P.faecalis X29 (MIC=9.5 uM) and is inactive against E.coli, P.aeruginosa and S.typhi. Active against C.albicans ATCC 2002 (MIC=19 uM) and is also active against the slime mold 090223 (MIC=37.5 uM). Has extremely low hemolytic activity against human erythrocytes (LC(50)=300 uM). The protein is Brevinin-2HS2A of Odorrana hainanensis (Odor frog).